The following is a 718-amino-acid chain: Zinc finger protein 39 (718 aa).

The 72-residue stretch at 59–130 (VSFEDVSVDF…EDVPKQSRAD (72 aa)) folds into the KRAB domain. The C2H2-type 1 zinc-finger motif lies at 298-320 (FECSICKKTFCTKCELMKHKKIH). The C2H2-type 2; degenerate zinc-finger motif lies at 353–375 (HRCKQCEKCFHQKNQQNVHERVP). 11 consecutive C2H2-type zinc fingers follow at residues 409–431 (YGCN…QKIH), 437–459 (YGCE…QRTH), 465–487 (YECK…HRTH), 493–515 (YECD…QKVH), 521–543 (YECE…QKTH), 549–571 (YECN…QGTH), 577–599 (YQCE…QRNH), 605–627 (YACE…QRSH), 633–655 (YSCE…QRTH), 661–683 (YECK…QVTH), and 689–711 (FECQ…QRIH).

As to expression, predominantly in the spermatocytes and spermatids of testes.

The protein resides in the nucleus. A putative DNA-binding regulatory protein associated with meiosis in spermatogenesis. This Mus musculus (Mouse) protein is Zinc finger protein 39 (Zfp39).